The primary structure comprises 171 residues: Peptide methionine sulfoxide reductase MsrA (171 aa).

Cys13 is a catalytic residue.

It belongs to the MsrA Met sulfoxide reductase family.

The catalysed reaction is L-methionyl-[protein] + [thioredoxin]-disulfide + H2O = L-methionyl-(S)-S-oxide-[protein] + [thioredoxin]-dithiol. It carries out the reaction [thioredoxin]-disulfide + L-methionine + H2O = L-methionine (S)-S-oxide + [thioredoxin]-dithiol. Functionally, has an important function as a repair enzyme for proteins that have been inactivated by oxidation. Catalyzes the reversible oxidation-reduction of methionine sulfoxide in proteins to methionine. This chain is Peptide methionine sulfoxide reductase MsrA, found in Mycobacterium sp. (strain MCS).